A 120-amino-acid chain; its full sequence is Large ribosomal subunit protein bL17 (120 aa).

Belongs to the bacterial ribosomal protein bL17 family. In terms of assembly, part of the 50S ribosomal subunit. Contacts protein L32.

This is Large ribosomal subunit protein bL17 from Mycoplasmopsis pulmonis (strain UAB CTIP) (Mycoplasma pulmonis).